The following is a 227-amino-acid chain: Probable GTP-binding protein EngB (227 aa).

An EngB-type G domain is found at 30 to 219 (KKPQIIVVGR…MVKINKNVNE (190 aa)). GTP contacts are provided by residues 38-45 (GRSNVGKS), 63-67 (GVTLK), 80-83 (DLPG), 160-163 (NKMD), and 197-199 (IGI). 2 residues coordinate Mg(2+): Ser45 and Thr65.

Belongs to the TRAFAC class TrmE-Era-EngA-EngB-Septin-like GTPase superfamily. EngB GTPase family. Mg(2+) is required as a cofactor.

Necessary for normal cell division and for the maintenance of normal septation. The chain is Probable GTP-binding protein EngB from Methanococcus aeolicus (strain ATCC BAA-1280 / DSM 17508 / OCM 812 / Nankai-3).